The primary structure comprises 140 residues: Putative pre-16S rRNA nuclease (140 aa).

It belongs to the YqgF nuclease family.

The protein localises to the cytoplasm. In terms of biological role, could be a nuclease involved in processing of the 5'-end of pre-16S rRNA. The chain is Putative pre-16S rRNA nuclease from Vibrio vulnificus (strain CMCP6).